We begin with the raw amino-acid sequence, 246 residues long: Small ribosomal subunit protein uS2 (246 aa).

This sequence belongs to the universal ribosomal protein uS2 family.

The sequence is that of Small ribosomal subunit protein uS2 from Dictyoglomus thermophilum (strain ATCC 35947 / DSM 3960 / H-6-12).